A 265-amino-acid chain; its full sequence is MRKNTYAMRYVAGQPAERILPPGAFAGVSPVYPAGTPLSSDEKIRVLVWNIFKQQRAEWQSVLKNFGKDAHLVLLQEAQTTPELVRFATSNYLAADQVPALVLPQHPSGVMTLASAHPIYCCPLREREPILRLPKSALVTVYPLPDARLLMVVNIHAVNFSLGVDVYSKQLLPIGDQIAHHSGPVIMAGDFNAWSRPRMNALYRFAREMSLREVRFSDDQRRRAFGRPLDFVFYRGLSVHDASVLVTRASDHNPLLVEFSPGKPD.

The protein belongs to the UPF0294 family.

The protein resides in the cytoplasm. The chain is UPF0294 protein KPK_4510 from Klebsiella pneumoniae (strain 342).